A 448-amino-acid polypeptide reads, in one-letter code: Methylenetetrahydrofolate--tRNA-(uracil-5-)-methyltransferase TrmFO (448 aa).

13 to 18 (GAGLAG) contributes to the FAD binding site.

This sequence belongs to the MnmG family. TrmFO subfamily. It depends on FAD as a cofactor.

It is found in the cytoplasm. It carries out the reaction uridine(54) in tRNA + (6R)-5,10-methylene-5,6,7,8-tetrahydrofolate + NADH + H(+) = 5-methyluridine(54) in tRNA + (6S)-5,6,7,8-tetrahydrofolate + NAD(+). It catalyses the reaction uridine(54) in tRNA + (6R)-5,10-methylene-5,6,7,8-tetrahydrofolate + NADPH + H(+) = 5-methyluridine(54) in tRNA + (6S)-5,6,7,8-tetrahydrofolate + NADP(+). Its function is as follows. Catalyzes the folate-dependent formation of 5-methyl-uridine at position 54 (M-5-U54) in all tRNAs. The chain is Methylenetetrahydrofolate--tRNA-(uracil-5-)-methyltransferase TrmFO from Streptococcus pyogenes serotype M18 (strain MGAS8232).